Reading from the N-terminus, the 163-residue chain is Crossover junction endodeoxyribonuclease RuvC (163 aa).

Catalysis depends on residues D8, E68, and D140. Mg(2+)-binding residues include D8, E68, and D140.

This sequence belongs to the RuvC family. Homodimer which binds Holliday junction (HJ) DNA. The HJ becomes 2-fold symmetrical on binding to RuvC with unstacked arms; it has a different conformation from HJ DNA in complex with RuvA. In the full resolvosome a probable DNA-RuvA(4)-RuvB(12)-RuvC(2) complex forms which resolves the HJ. The cofactor is Mg(2+).

The protein localises to the cytoplasm. The catalysed reaction is Endonucleolytic cleavage at a junction such as a reciprocal single-stranded crossover between two homologous DNA duplexes (Holliday junction).. In terms of biological role, the RuvA-RuvB-RuvC complex processes Holliday junction (HJ) DNA during genetic recombination and DNA repair. Endonuclease that resolves HJ intermediates. Cleaves cruciform DNA by making single-stranded nicks across the HJ at symmetrical positions within the homologous arms, yielding a 5'-phosphate and a 3'-hydroxyl group; requires a central core of homology in the junction. The consensus cleavage sequence is 5'-(A/T)TT(C/G)-3'. Cleavage occurs on the 3'-side of the TT dinucleotide at the point of strand exchange. HJ branch migration catalyzed by RuvA-RuvB allows RuvC to scan DNA until it finds its consensus sequence, where it cleaves and resolves the cruciform DNA. The protein is Crossover junction endodeoxyribonuclease RuvC of Erythrobacter litoralis (strain HTCC2594).